Here is a 625-residue protein sequence, read N- to C-terminus: tRNA uridine 5-carboxymethylaminomethyl modification enzyme MnmG (625 aa).

Residues 9 to 14 (GGGHAG), valine 121, and serine 176 each bind FAD. NAD(+) is bound at residue 270-284 (GPRYCPSIEDKIYRF). Glutamine 367 is a binding site for FAD.

Belongs to the MnmG family. Homodimer. Heterotetramer of two MnmE and two MnmG subunits. FAD is required as a cofactor.

Its subcellular location is the cytoplasm. In terms of biological role, NAD-binding protein involved in the addition of a carboxymethylaminomethyl (cmnm) group at the wobble position (U34) of certain tRNAs, forming tRNA-cmnm(5)s(2)U34. This Nitratiruptor sp. (strain SB155-2) protein is tRNA uridine 5-carboxymethylaminomethyl modification enzyme MnmG.